The sequence spans 85 residues: Small ribosomal subunit protein uS17 (85 aa).

The protein belongs to the universal ribosomal protein uS17 family. In terms of assembly, part of the 30S ribosomal subunit.

Functionally, one of the primary rRNA binding proteins, it binds specifically to the 5'-end of 16S ribosomal RNA. The chain is Small ribosomal subunit protein uS17 from Mycoplasma genitalium (strain ATCC 33530 / DSM 19775 / NCTC 10195 / G37) (Mycoplasmoides genitalium).